The primary structure comprises 281 residues: MEMO1 family protein Pars_0062 (281 aa).

It belongs to the MEMO1 family.

In Pyrobaculum arsenaticum (strain DSM 13514 / JCM 11321 / PZ6), this protein is MEMO1 family protein Pars_0062.